The chain runs to 427 residues: 3-phosphoshikimate 1-carboxyvinyltransferase (427 aa).

The 3-phosphoshikimate site is built by lysine 20, serine 21, and arginine 25. Residue lysine 20 participates in phosphoenolpyruvate binding. The phosphoenolpyruvate site is built by glycine 90 and arginine 118. 6 residues coordinate 3-phosphoshikimate: serine 163, serine 164, glutamine 165, serine 191, aspartate 309, and lysine 336. Glutamine 165 is a phosphoenolpyruvate binding site. The Proton acceptor role is filled by aspartate 309. 2 residues coordinate phosphoenolpyruvate: arginine 340 and arginine 381.

Belongs to the EPSP synthase family. Monomer.

The protein localises to the cytoplasm. The catalysed reaction is 3-phosphoshikimate + phosphoenolpyruvate = 5-O-(1-carboxyvinyl)-3-phosphoshikimate + phosphate. It functions in the pathway metabolic intermediate biosynthesis; chorismate biosynthesis. In terms of biological role, catalyzes the transfer of the enolpyruvyl moiety of phosphoenolpyruvate (PEP) to the 5-hydroxyl of shikimate-3-phosphate (S3P) to produce enolpyruvyl shikimate-3-phosphate and inorganic phosphate. The protein is 3-phosphoshikimate 1-carboxyvinyltransferase of Methanococcoides burtonii (strain DSM 6242 / NBRC 107633 / OCM 468 / ACE-M).